A 115-amino-acid chain; its full sequence is Large ribosomal subunit protein bL19 (115 aa).

This sequence belongs to the bacterial ribosomal protein bL19 family.

Functionally, this protein is located at the 30S-50S ribosomal subunit interface and may play a role in the structure and function of the aminoacyl-tRNA binding site. The sequence is that of Large ribosomal subunit protein bL19 from Akkermansia muciniphila (strain ATCC BAA-835 / DSM 22959 / JCM 33894 / BCRC 81048 / CCUG 64013 / CIP 107961 / Muc).